Reading from the N-terminus, the 135-residue chain is UPF0299 membrane protein YPK_2559 (135 aa).

A run of 3 helical transmembrane segments spans residues 30–50 (LLLPIVIPGSIIGMLILFVLL), 66–86 (LLIRYMALLFVPIGVGVMQYY), and 93–113 (FGPIVVSCFISTLIVMLVVAY).

It belongs to the UPF0299 family.

It localises to the cell inner membrane. The polypeptide is UPF0299 membrane protein YPK_2559 (Yersinia pseudotuberculosis serotype O:3 (strain YPIII)).